The following is a 72-amino-acid chain: Hypotensin (72 aa).

The first 24 residues, 1 to 24, serve as a signal peptide directing secretion; that stretch reads MKMMIAVFVSILLLMFSLSSTAMG. Propeptides lie at residues 25-35 and 61-72; these read METEQQNMEER and RFDPATFGENED.

The protein belongs to the non-disulfide-bridged peptide (NDBP) superfamily. Expressed by the venom gland.

The protein resides in the secreted. Functionally, potentiates the hypotensive action of bradykinin (BK) in normotensive rats, and induces a vasorelaxant effect in mesenteric artery rings that is induced by endothelium-dependent release of nitric oxide (NO). Does not inhibit angiotensin converting enzyme (ACE). Shows neither hemolytic activity nor cytotoxicity to normal and cancer cells. Shows moderate antimicrobial activity against the fungi Candida albicans and the filamentous fungus Trichophyton rubrum, as well as against the bacteria C.albicans (MIC=128 ug/mL), C.tropicalis (MIC=128 ug/mL) and Aspergillus flavus (MIC=128 ug/mL). Has no antimicrobial activity against S.aureus, S.epidermidis and P.aeruginosa. The protein is Hypotensin of Tityus stigmurus (Brazilian scorpion).